The following is a 441-amino-acid chain: MSEREVSTAPAGTDMPAAKKQKLSSDENSNPDLSGDENDDAVSIESGTNTERPDTPTNTPNAPGRKSWGKGKWKSKKCKYSFKCVNSLKEDHNQPLFGVQFNWHSKEGDPLVFATVGSNRVTLYECHSQGEIRLLQSYVDADADENFYTCAWTYDSNTSHPLLAVAGSRGIIRIINPITMQCIKHYVGHGNAINELKFHPRDPNLLLSVSKDHALRLWNIQTDTLVAIFGGVEGHRDEVLSADYDLLGEKIMSCGMDHSLKLWRINSKRMMNAIKESYDYNPNKTNRPFISQKIHFPDFSTRDIHRNYVDCVRWLGDLILSKSCENAIVCWKPGKMEDDIDKIKPSESNVTILGRFDYSQCDIWYMRFSMDFWQKMLALGNQVGKLYVWDLEVEDPHKAKCTTLTHHKCGAAIRQTSFSRDSSILIAVCDDASIWRWDRLR.

The disordered stretch occupies residues 1-72 (MSEREVSTAP…PGRKSWGKGK (72 aa)). Residue S2 is modified to N-acetylserine. 2 positions are modified to phosphoserine: S2 and S34. A compositionally biased stretch (polar residues) spans 45-61 (ESGTNTERPDTPTNTPN). T55 carries the post-translational modification Phosphothreonine. N6,N6,N6-trimethyllysine; alternate is present on K66. K66 is subject to N6,N6-dimethyllysine; alternate. K66 carries the N6-methyllysine; alternate modification. An interaction with EZH2 region spans residues 81-441 (SFKCVNSLKE…ASIWRWDRLR (361 aa)). WD repeat units lie at residues 91–134 (DHNQ…EIRL), 142–185 (DADE…CIKH), 188–228 (GHGN…LVAI), and 234–275 (GHRD…NAIK). Required for interaction with the matrix protein MA of HIV-1 stretches follow at residues 149-303 (TCAW…STRD) and 301-441 (TRDI…DRLR). Residues K197, K268, and K284 each carry the N6,N6,N6-trimethyllysine; alternate modification. 3 positions are modified to N6,N6-dimethyllysine; alternate: K197, K268, and K284. An N6-methyllysine; alternate mark is found at K197, K268, and K284. 3 WD repeats span residues 304-341 (IHRN…DDID), 359-399 (SQCD…PHKA), and 408-441 (KCGA…DRLR).

This sequence belongs to the WD repeat ESC family. Component of the PRC2/EED-EZH2 complex, which includes EED, EZH2, SUZ12, RBBP4 and RBBP7 and possibly AEBP2. The minimum components required for methyltransferase activity of the PRC2/EED-EZH2 complex are EED, EZH2 and SUZ12. Component of the PRC2/EED-EZH1 complex, which includes EED, EZH1, SUZ12, RBBP4 and AEBP2. The PRC2 complex may also interact with DNMT1, DNMT3A, DNMT3B and PHF1 via the EZH2 subunit and with SIRT1 via the SUZ12 subunit. Interacts with HDAC, HDAC2, histone H1 and YY1. May interact with ITGA4, ITGAE and ITGB7. Interacts with CDYL. Interacts with BMAL1. Interacts with KMT2A/MLL1. In terms of assembly, (Microbial infection) May interact with the MA protein of HIV-1. Post-translationally, methylated. Binding to histone H1 'Lys-26' promotes mono-, di-, and trimethylation of internal lysines. In terms of tissue distribution, expressed in brain, colon, heart, kidney, liver, lung, muscle, ovary, peripheral blood leukocytes, pancreas, placenta, prostate, spleen, small intestine, testis, thymus and uterus. Appears to be overexpressed in breast and colon cancer.

The protein localises to the nucleus. It is found in the chromosome. In terms of biological role, polycomb group (PcG) protein. Component of the PRC2/EED-EZH2 complex, which methylates 'Lys-9' and 'Lys-27' of histone H3, leading to transcriptional repression of the affected target gene. Also recognizes 'Lys-26' trimethylated histone H1 with the effect of inhibiting PRC2 complex methyltransferase activity on nucleosomal histone H3 'Lys-27', whereas H3 'Lys-27' recognition has the opposite effect, enabling the propagation of this repressive mark. The PRC2/EED-EZH2 complex may also serve as a recruiting platform for DNA methyltransferases, thereby linking two epigenetic repression systems. Genes repressed by the PRC2/EED-EZH2 complex include HOXC8, HOXA9, MYT1 and CDKN2A. This is Polycomb protein EED from Homo sapiens (Human).